A 155-amino-acid chain; its full sequence is Egg cell-secreted protein 1.5 (155 aa).

The N-terminal stretch at 1 to 32 is a signal peptide; sequence MATKSTSKPLLLSFLMMSYLISTFHVITVAEG.

Belongs to the plant egg cell-secreted peptide family. As to expression, restricted to female reproductive tissues, specifically accumulating in storage vesicles of the unfertilized egg cell.

The protein localises to the cytoplasmic vesicle. Its subcellular location is the secreted. In terms of biological role, involved in the regulation of gamete interactions during the double fertilization and to prevent multiple-pollen tube attraction; mediates the redistribution of the gamete fusogen HAP2/GCS1 to the cell surface after secretion upon sperm arrival. The polypeptide is Egg cell-secreted protein 1.5 (EC1.5) (Arabidopsis thaliana (Mouse-ear cress)).